The chain runs to 121 residues: UPF0344 protein BCE_1257 (121 aa).

Helical transmembrane passes span 6–26, 38–58, 65–85, and 92–112; these read ITAWALGLILFFVAYSLYSAG, LMYIFIIVTGFMLYMSIVKTA, WYGLKMLAGILVIGGMEMVLV, and PTGAVWGLFIVALVAVIYLGL.

Belongs to the UPF0344 family.

It is found in the cell membrane. This chain is UPF0344 protein BCE_1257, found in Bacillus cereus (strain ATCC 10987 / NRS 248).